The sequence spans 186 residues: Ribosome-recycling factor (186 aa).

The protein belongs to the RRF family.

The protein resides in the cytoplasm. Responsible for the release of ribosomes from messenger RNA at the termination of protein biosynthesis. May increase the efficiency of translation by recycling ribosomes from one round of translation to another. The chain is Ribosome-recycling factor from Cupriavidus taiwanensis (strain DSM 17343 / BCRC 17206 / CCUG 44338 / CIP 107171 / LMG 19424 / R1) (Ralstonia taiwanensis (strain LMG 19424)).